Reading from the N-terminus, the 333-residue chain is Holliday junction branch migration complex subunit RuvB (333 aa).

A large ATPase domain (RuvB-L) region spans residues 1-182 (MDERLVSGSA…FGVISRLEYY (182 aa)). Residues Leu-21, Arg-22, Gly-63, Lys-66, Thr-67, Thr-68, 129–131 (EDY), Arg-172, Tyr-182, and Arg-219 each bind ATP. Thr-67 contributes to the Mg(2+) binding site. Residues 183–253 (QVDQLAQIIE…LAVEALERLQ (71 aa)) form a small ATPAse domain (RuvB-S) region. The head domain (RuvB-H) stretch occupies residues 256–333 (RLGLDHIDHK…AHLGMEVPKR (78 aa)). DNA is bound by residues Arg-311 and Arg-316.

This sequence belongs to the RuvB family. In terms of assembly, homohexamer. Forms an RuvA(8)-RuvB(12)-Holliday junction (HJ) complex. HJ DNA is sandwiched between 2 RuvA tetramers; dsDNA enters through RuvA and exits via RuvB. An RuvB hexamer assembles on each DNA strand where it exits the tetramer. Each RuvB hexamer is contacted by two RuvA subunits (via domain III) on 2 adjacent RuvB subunits; this complex drives branch migration. In the full resolvosome a probable DNA-RuvA(4)-RuvB(12)-RuvC(2) complex forms which resolves the HJ.

It localises to the cytoplasm. It catalyses the reaction ATP + H2O = ADP + phosphate + H(+). Its function is as follows. The RuvA-RuvB-RuvC complex processes Holliday junction (HJ) DNA during genetic recombination and DNA repair, while the RuvA-RuvB complex plays an important role in the rescue of blocked DNA replication forks via replication fork reversal (RFR). RuvA specifically binds to HJ cruciform DNA, conferring on it an open structure. The RuvB hexamer acts as an ATP-dependent pump, pulling dsDNA into and through the RuvAB complex. RuvB forms 2 homohexamers on either side of HJ DNA bound by 1 or 2 RuvA tetramers; 4 subunits per hexamer contact DNA at a time. Coordinated motions by a converter formed by DNA-disengaged RuvB subunits stimulates ATP hydrolysis and nucleotide exchange. Immobilization of the converter enables RuvB to convert the ATP-contained energy into a lever motion, pulling 2 nucleotides of DNA out of the RuvA tetramer per ATP hydrolyzed, thus driving DNA branch migration. The RuvB motors rotate together with the DNA substrate, which together with the progressing nucleotide cycle form the mechanistic basis for DNA recombination by continuous HJ branch migration. Branch migration allows RuvC to scan DNA until it finds its consensus sequence, where it cleaves and resolves cruciform DNA. The chain is Holliday junction branch migration complex subunit RuvB from Geobacillus thermodenitrificans (strain NG80-2).